Here is a 141-residue protein sequence, read N- to C-terminus: Cell division protein SepF (141 aa).

Belongs to the SepF family. Homodimer. Interacts with FtsZ.

It is found in the cytoplasm. Cell division protein that is part of the divisome complex and is recruited early to the Z-ring. Probably stimulates Z-ring formation, perhaps through the cross-linking of FtsZ protofilaments. Its function overlaps with FtsA. The protein is Cell division protein SepF of Anoxybacillus flavithermus (strain DSM 21510 / WK1).